Reading from the N-terminus, the 129-residue chain is Histone H2B.1 (129 aa).

Residues 1-17 (MSAEKKPASKAPAEKKP) show a composition bias toward basic and acidic residues. The disordered stretch occupies residues 1 to 35 (MSAEKKPASKAPAEKKPAAKKTAPSADGKKRTKAR). Lys-5 and Lys-6 each carry N6-acetyllysine; alternate. Residues Lys-5 and Lys-6 each participate in a glycyl lysine isopeptide (Lys-Gly) (interchain with G-Cter in SUMO); alternate cross-link. Ser-9 is subject to Phosphoserine. N6-acetyllysine is present on Lys-10. Lys-15 is modified (N6-acetyllysine; alternate). Lys-15 participates in a covalent cross-link: Glycyl lysine isopeptide (Lys-Gly) (interchain with G-Cter in SUMO); alternate. Lys-16 is covalently cross-linked (Glycyl lysine isopeptide (Lys-Gly) (interchain with G-Cter in SUMO)). A Glycyl lysine isopeptide (Lys-Gly) (interchain with G-Cter in ubiquitin) cross-link involves residue Lys-122.

Belongs to the histone H2B family. The nucleosome is a histone octamer containing two molecules each of H2A, H2B, H3 and H4 assembled in one H3-H4 heterotetramer and two H2A-H2B heterodimers. The octamer wraps approximately 147 bp of DNA. Post-translationally, monoubiquitinated by the UBC2-BRE1 complex to form H2BK123ub1. H2BK123ub1 gives a specific tag for epigenetic transcriptional activation and is also prerequisite for H3K4me and H3K79me formation. H2BK123ub1 also modulates the formation of double-strand breaks during meiosis and is a prerequisite for DNA-damage checkpoint activation. Phosphorylated by STE20 to form H2BS10ph during progression through meiotic prophase. May be correlated with chromosome condensation. In terms of processing, acetylated by GCN5 to form H2BK11ac and H2BK16ac. H2BK16ac can also be formed by ESA1. Acetylation of N-terminal lysines and particularly formation of H2BK11acK16ac has a positive effect on transcription. Post-translationally, sumoylation to form H2BK6su or H2BK7su, and probably also H2BK16su or H2BK17su, occurs preferentially near the telomeres and represses gene transcription.

Its subcellular location is the nucleus. It localises to the chromosome. Its function is as follows. Core component of nucleosome. Nucleosomes wrap and compact DNA into chromatin, limiting DNA accessibility to the cellular machineries which require DNA as a template. Histones thereby play a central role in transcription regulation, DNA repair, DNA replication and chromosomal stability. DNA accessibility is regulated via a complex set of post-translational modifications of histones, also called histone code, and nucleosome remodeling. The sequence is that of Histone H2B.1 (HTB1) from Candida glabrata (strain ATCC 2001 / BCRC 20586 / JCM 3761 / NBRC 0622 / NRRL Y-65 / CBS 138) (Yeast).